The sequence spans 921 residues: Probable dipeptidyl-aminopeptidase B (921 aa).

Residues 1–33 (MAGHTEENAQLLSTEQESVSRHSSDSAASTAST) form a disordered region. Residues 1–109 (MAGHTEENAQ…NKSVDKKLRK (109 aa)) lie on the Cytoplasmic side of the membrane. Positions 8 to 17 (NAQLLSTEQE) are enriched in polar residues. The helical; Signal-anchor for type II membrane protein transmembrane segment at 110–130 (LIWIVGGVFIGAWVLALFIFL) threads the bilayer. At 131 to 921 (GKQAYKHSSE…VPLQIDAAKV (791 aa)) the chain is on the vacuolar side. Residue Asn-362 is glycosylated (N-linked (GlcNAc...) asparagine). The active-site Charge relay system is the Ser-768. Asn-822 carries N-linked (GlcNAc...) asparagine glycosylation. Active-site charge relay system residues include Asp-845 and His-878.

It belongs to the peptidase S9B family.

It is found in the vacuole membrane. It catalyses the reaction Release of an N-terminal dipeptide, Xaa-Yaa-|-Zaa-, from a polypeptide, preferentially when Yaa is Pro, provided Zaa is neither Pro nor hydroxyproline.. In terms of biological role, type IV dipeptidyl-peptidase which removes N-terminal dipeptides sequentially from polypeptides having unsubstituted N-termini provided that the penultimate residue is proline. This chain is Probable dipeptidyl-aminopeptidase B (dapB), found in Sclerotinia sclerotiorum (strain ATCC 18683 / 1980 / Ss-1) (White mold).